Here is a 303-residue protein sequence, read N- to C-terminus: Small ribosomal subunit protein uS2 (303 aa).

Positions 258–303 (ATLRENAVVTENEVKKTDEEEGASSEAARADAQNEEAVAKPGEEVE) are disordered. Basic and acidic residues predominate over residues 294–303 (AVAKPGEEVE).

This sequence belongs to the universal ribosomal protein uS2 family.

This is Small ribosomal subunit protein uS2 from Bifidobacterium animalis subsp. lactis (strain AD011).